The sequence spans 270 residues: Dermonecrotic toxin LsaSicTox-alphaIB1av (270 aa).

Histidine 2 is a catalytic residue. Residues glutamate 22 and aspartate 24 each contribute to the Mg(2+) site. Histidine 38 (nucleophile) is an active-site residue. 2 disulfides stabilise this stretch: cysteine 42/cysteine 48 and cysteine 44/cysteine 187. Aspartate 82 provides a ligand contact to Mg(2+).

Belongs to the arthropod phospholipase D family. Class II subfamily. It depends on Mg(2+) as a cofactor. In terms of tissue distribution, expressed by the venom gland.

It localises to the secreted. The enzyme catalyses an N-(acyl)-sphingosylphosphocholine = an N-(acyl)-sphingosyl-1,3-cyclic phosphate + choline. It carries out the reaction an N-(acyl)-sphingosylphosphoethanolamine = an N-(acyl)-sphingosyl-1,3-cyclic phosphate + ethanolamine. It catalyses the reaction a 1-acyl-sn-glycero-3-phosphocholine = a 1-acyl-sn-glycero-2,3-cyclic phosphate + choline. The catalysed reaction is a 1-acyl-sn-glycero-3-phosphoethanolamine = a 1-acyl-sn-glycero-2,3-cyclic phosphate + ethanolamine. Its function is as follows. Dermonecrotic toxins cleave the phosphodiester linkage between the phosphate and headgroup of certain phospholipids (sphingolipid and lysolipid substrates), forming an alcohol (often choline) and a cyclic phosphate. This toxin acts on sphingomyelin (SM). It may also act on ceramide phosphoethanolamine (CPE), lysophosphatidylcholine (LPC) and lysophosphatidylethanolamine (LPE), but not on lysophosphatidylserine (LPS), and lysophosphatidylglycerol (LPG). It acts by transphosphatidylation, releasing exclusively cyclic phosphate products as second products. Induces dermonecrosis, hemolysis, increased vascular permeability, edema, inflammatory response, and platelet aggregation. The polypeptide is Dermonecrotic toxin LsaSicTox-alphaIB1av (Loxosceles sabina (Tucson recluse spider)).